An 891-amino-acid chain; its full sequence is MITIIWSLCLIFCLSNSILVIAKDLCLPDQRDALLEFKNEFSIPSPDSDLMLILQTTAKWRNNTDCCSWGGISCDPKTGVVVELDLGNSDLNGRLRSNSSLFRLQHLQSLDLSYNDLSCTLPDSSGNFKYLRVLNLLGCNLFGEIPTSLRSLSYLTDLDLSYNDDLTGEILDSMGNLKHLRVLSLTSCKFTGKIPSSLGNLTYLTDLDLSWNYFTGELPDSMGNLKSLRVLNLHRCNFFGKIPTSLGSLSNLTDLDISKNEFTSEGPDSMSSLNRLTDFQLMLLNLSSLTNVDLSSNQFKAMLPSNMSSLSKLEAFDISGNSFSGTIPSSLFMLPSLIKLDLGTNDFSGPLKIGNISSPSNLQELYIGENNINGPIPRSILKLVGLSALSLSFWDTGGIVDFSIFLQLKSLRSLDLSGINLNISSSHHLPSHMMHLILSSCNISQFPKFLENQTSLYHLDISANQIEGQVPEWLWRLPTLRYVNIAQNAFSGELTMLPNPIYSFIASDNKFSGEIPRAVCEIGTLVLSNNNFSGSIPPCFEISNKTLSILHLRNNSLSGVIPEESLHGYLRSLDVGSNRLSGQFPKSLINCSYLQFLNVEENRINDTFPSWLKSLPNLQLLVLRSNEFHGPIFSPGDSLSFSKLRFFDISENRFSGVLPSDYFVGWSVMSSFVDIIDNTPGFTVVGDDQESFHKSVVLTIKGLNMELVGSGFEIYKTIDVSGNRLEGDIPESIGILKELIVLNMSNNAFTGHIPPSLSNLSNLQSLDLSQNRLSGSIPGELGELTFLARMNFSYNMLEGPIPQGTQIQSQNSSSFAENPGLCGAPLQKKCGGEEEEDKEKEEKDKGLSWVAAAIGYVPGLFCGLAIGHILTSYKRDWFMRIFSCFSSPLKK.

The first 22 residues, 1-22 (MITIIWSLCLIFCLSNSILVIA), serve as a signal peptide directing secretion. At 23-849 (KDLCLPDQRD…KEEKDKGLSW (827 aa)) the chain is on the extracellular side. 2 N-linked (GlcNAc...) asparagine glycosylation sites follow: Asn62 and Asn98. LRR repeat units lie at residues 105–130 (QHLQ…NFKY), 132–152 (RVLN…LRSL), 153–176 (SYLT…SMGN), 177–201 (LKHL…LGNL), 203–225 (YLTD…MGNL), 226–249 (KSLR…LGSL), and 250–272 (SNLT…SMSS). Asn200 is a glycosylation site (N-linked (GlcNAc...) asparagine). Asn251, Asn285, and Asn306 each carry an N-linked (GlcNAc...) asparagine glycan. LRR repeat units lie at residues 286–309 (LSSL…NMSS), 310–334 (LSKL…LFML), 336–358 (SLIK…NISS), and 359–383 (PSNL…ILKL). A glycan (N-linked (GlcNAc...) asparagine) is linked at Asn355. One copy of the LRR 12; degenerate repeat lies at 384 to 407 (VGLSALSLSFWDTGGIVDFSIFLQ). LRR repeat units follow at residues 408-436 (LKSL…MMHL), 438-453 (LSSC…LENQ), 454-477 (TSLY…LWRL), 478-504 (PTLR…IYSF), 506-519 (ASDN…PRAV), 520-544 (CEIG…EISN), 545-568 (KTLS…SLHG), 570-591 (LRSL…LINC), 593-614 (YLQF…WLKS), 615-641 (LPNL…SLSF), 642-665 (SKLR…YFVG), 712-736 (FEIY…IGIL), 737-760 (KELI…LSNL), 761-784 (SNLQ…LGEL), and 786-809 (FLAR…QIQS). Asn422, Asn442, and Asn452 each carry an N-linked (GlcNAc...) asparagine glycan. N-linked (GlcNAc...) asparagine glycosylation is found at Asn531, Asn544, Asn554, Asn590, and Asn605. N-linked (GlcNAc...) asparagine glycans are attached at residues Asn743 and Asn759. Residues Asn791 and Asn811 are each glycosylated (N-linked (GlcNAc...) asparagine). The chain crosses the membrane as a helical span at residues 850 to 870 (VAAAIGYVPGLFCGLAIGHIL). Topologically, residues 871–891 (TSYKRDWFMRIFSCFSSPLKK) are cytoplasmic.

This sequence belongs to the RLP family.

Its subcellular location is the cell membrane. The protein is Receptor-like protein 50 of Arabidopsis thaliana (Mouse-ear cress).